A 178-amino-acid chain; its full sequence is 2-C-methyl-D-erythritol 2,4-cyclodiphosphate synthase (178 aa).

The a divalent metal cation site is built by D24, H26, and H61. Residue 24–26 coordinates 4-CDP-2-C-methyl-D-erythritol 2-phosphate; sequence DSH. 150–153 provides a ligand contact to 4-CDP-2-C-methyl-D-erythritol 2-phosphate; the sequence is TSGE.

It belongs to the IspF family. Homotrimer. Requires a divalent metal cation as cofactor.

The catalysed reaction is 4-CDP-2-C-methyl-D-erythritol 2-phosphate = 2-C-methyl-D-erythritol 2,4-cyclic diphosphate + CMP. The protein operates within isoprenoid biosynthesis; isopentenyl diphosphate biosynthesis via DXP pathway; isopentenyl diphosphate from 1-deoxy-D-xylulose 5-phosphate: step 4/6. Functionally, involved in the biosynthesis of isopentenyl diphosphate (IPP) and dimethylallyl diphosphate (DMAPP), two major building blocks of isoprenoid compounds. Catalyzes the conversion of 4-diphosphocytidyl-2-C-methyl-D-erythritol 2-phosphate (CDP-ME2P) to 2-C-methyl-D-erythritol 2,4-cyclodiphosphate (ME-CPP) with a corresponding release of cytidine 5-monophosphate (CMP). The sequence is that of 2-C-methyl-D-erythritol 2,4-cyclodiphosphate synthase from Chlamydia trachomatis serovar L2b (strain UCH-1/proctitis).